A 333-amino-acid chain; its full sequence is NADH-quinone oxidoreductase subunit H (333 aa).

Helical transmembrane passes span 15-35 (FFIF…FVTY), 88-108 (FILA…VIPF), 117-137 (IGVG…GVVT), 159-179 (ISYE…AGSL), 191-211 (VWYI…AVAE), 239-259 (WAFF…LITV), 274-296 (IPGA…WFRV), and 313-333 (VLLP…ELFF).

Belongs to the complex I subunit 1 family. As to quaternary structure, NDH-1 is composed of 14 different subunits. Subunits NuoA, H, J, K, L, M, N constitute the membrane sector of the complex.

It is found in the cell membrane. It catalyses the reaction a quinone + NADH + 5 H(+)(in) = a quinol + NAD(+) + 4 H(+)(out). In terms of biological role, NDH-1 shuttles electrons from NADH, via FMN and iron-sulfur (Fe-S) centers, to quinones in the respiratory chain. The immediate electron acceptor for the enzyme in this species is believed to be ubiquinone. Couples the redox reaction to proton translocation (for every two electrons transferred, four hydrogen ions are translocated across the cytoplasmic membrane), and thus conserves the redox energy in a proton gradient. This subunit may bind ubiquinone. In Bacillus thuringiensis subsp. konkukian (strain 97-27), this protein is NADH-quinone oxidoreductase subunit H.